A 957-amino-acid chain; its full sequence is UvrABC system protein A (957 aa).

Position 33–40 (G33–S40) interacts with ATP. The C4-type zinc-finger motif lies at C252–C279. ABC transporter domains are found at residues W309 to L587 and P607 to R935. Residue G639–S646 participates in ATP binding. The C4-type zinc finger occupies C738–C764.

Belongs to the ABC transporter superfamily. UvrA family. As to quaternary structure, forms a heterotetramer with UvrB during the search for lesions.

The protein localises to the cytoplasm. In terms of biological role, the UvrABC repair system catalyzes the recognition and processing of DNA lesions. UvrA is an ATPase and a DNA-binding protein. A damage recognition complex composed of 2 UvrA and 2 UvrB subunits scans DNA for abnormalities. When the presence of a lesion has been verified by UvrB, the UvrA molecules dissociate. This is UvrABC system protein A from Halalkalibacterium halodurans (strain ATCC BAA-125 / DSM 18197 / FERM 7344 / JCM 9153 / C-125) (Bacillus halodurans).